The sequence spans 456 residues: MFLLLPFDSLIVSLLGISLTVLFTLLLVFIIVPAVFGVSFGIRKLYMKTLLKIFAWATLRMERGAKEKNHQLYKPYTNGIIAKDPTSLEEEIKEIRRSGSSKALDNTPEFELSDIFYFCRKGMETIMDDEVTKRFSAEELESWNLLSRTNYNFQYISLRLTVLWGLGVLIRYCLLLSLRIALAFTGISLLVVGTTMVGYLPNGRFKEFLSKHVHLMCYRICVRALTAIITYHDRKNRPRNGGICVANHTSPIDVIILASDGYYAMVGQVHGGLMGVIQRAMVKACPHVWFERSEVKDRHLVARRLTEHVQDKSKLPILIFPEGTCINNTSVMMFKKGSFEIGATVYPVAIKYDPQFGDAFWNSSKYGMVTYLLRMMTSWAIVCSVWYLPPMTRQAEEDAVQFANRVKSAIARQGGLVDLLWDGGLKREKVKDTFKEEQQKLYSKMIVGNHEDRSRS.

Residues Met1 to Gly37 form the signal peptide. The next 2 membrane-spanning stretches (helical) occupy residues Ile156 to Leu176 and Ile180 to Leu200. Residue Asn247 is glycosylated (N-linked (GlcNAc...) asparagine). Residues His248–Asp253 carry the HXXXXD motif motif. 3 N-linked (GlcNAc...) asparagine glycosylation sites follow: Asn327, Asn328, and Asn362.

It belongs to the 1-acyl-sn-glycerol-3-phosphate acyltransferase family.

It localises to the endoplasmic reticulum membrane. The catalysed reaction is sn-glycerol 3-phosphate + an acyl-CoA = a 1-acyl-sn-glycero-3-phosphate + CoA. The enzyme catalyses dodecanoyl-CoA + sn-glycerol 3-phosphate = 1-dodecanoyl-sn-glycerol 3-phosphate + CoA. It catalyses the reaction sn-glycerol 3-phosphate + hexadecanoyl-CoA = 1-hexadecanoyl-sn-glycero-3-phosphate + CoA. It carries out the reaction sn-glycerol 3-phosphate + octadecanoyl-CoA = 1-octadecanoyl-sn-glycero-3-phosphate + CoA. The catalysed reaction is sn-glycerol 3-phosphate + (9Z)-octadecenoyl-CoA = 1-(9Z-octadecenoyl)-sn-glycero-3-phosphate + CoA. The enzyme catalyses (9Z,12Z)-octadecadienoyl-CoA + sn-glycerol 3-phosphate = 1-(9Z,12Z)-octadecadienoyl-sn-glycero-3-phosphate + CoA. It participates in phospholipid metabolism; CDP-diacylglycerol biosynthesis; CDP-diacylglycerol from sn-glycerol 3-phosphate: step 1/3. Its function is as follows. Converts glycerol-3-phosphate to 1-acyl-sn-glycerol-3-phosphate (lysophosphatidic acid or LPA) by incorporating an acyl moiety at the sn-1 position of the glycerol backbone. Active against both saturated and unsaturated long-chain fatty acyl-CoAs. Protects cells against lipotoxicity. This Bos taurus (Bovine) protein is Glycerol-3-phosphate acyltransferase 4.